The chain runs to 167 residues: MITLIIFSFLSFLLGIILSFTAYKFRSQEDPIVAIVNELLPQSQCAQCGYSGCYPYAKAIVENSEKINKCIPGGTDLISAISSVLSIEVPEKNLIITHKKQKNNTVLINESNCVGCSKCASFCPVDAIVGAPNFIHTVLQEFCTGCNICLLHCPTNCIEIKKETYEE.

The hydrophobic stretch occupies residues 1 to 22 (MITLIIFSFLSFLLGIILSFTA). A 4Fe-4S domain is found at 28–87 (QEDPIVAIVNELLPQSQCAQCGYSGCYPYAKAIVENSEKINKCIPGGTDLISAISSVLSI). [4Fe-4S] cluster is bound by residues Cys-45, Cys-48, Cys-53, Cys-70, Cys-113, Cys-116, Cys-119, Cys-123, Cys-143, Cys-146, Cys-149, and Cys-153. 2 consecutive 4Fe-4S ferredoxin-type domains span residues 104–133 (NTVL…GAPN) and 134–163 (FIHT…IKKE).

The protein belongs to the 4Fe4S bacterial-type ferredoxin family. RnfB subfamily. In terms of assembly, the complex is composed of six subunits: RnfA, RnfB, RnfC, RnfD, RnfE and RnfG. Requires [4Fe-4S] cluster as cofactor.

It localises to the cell inner membrane. Its function is as follows. Part of a membrane-bound complex that couples electron transfer with translocation of ions across the membrane. The sequence is that of Ion-translocating oxidoreductase complex subunit B from Buchnera aphidicola subsp. Acyrthosiphon pisum (strain 5A).